Here is a 217-residue protein sequence, read N- to C-terminus: UPF0173 metal-dependent hydrolase MJ1163 (217 aa).

It belongs to the UPF0173 family.

This is UPF0173 metal-dependent hydrolase MJ1163 from Methanocaldococcus jannaschii (strain ATCC 43067 / DSM 2661 / JAL-1 / JCM 10045 / NBRC 100440) (Methanococcus jannaschii).